The following is a 600-amino-acid chain: Zinc finger and BTB domain-containing protein 46 (600 aa).

The BTB domain maps to Cys-31–Ser-99. Residues Arg-173–Gly-222 form a disordered region. Residues Gly-197–Gly-207 are compositionally biased toward basic and acidic residues. Lys-229 participates in a covalent cross-link: Glycyl lysine isopeptide (Lys-Gly) (interchain with G-Cter in SUMO2). The residue at position 234 (Ser-234) is a Phosphoserine. The segment at Pro-235–Thr-278 is disordered. Over residues Leu-243–Gly-259 the composition is skewed to polar residues. 2 consecutive C2H2-type zinc fingers follow at residues Phe-418 to His-436 and Tyr-446 to His-468. The interval Leu-513–Ser-600 is disordered. Acidic residues predominate over residues Tyr-533 to Asp-555. Basic and acidic residues-rich tracts occupy residues Val-556–Asp-574 and Glu-591–Ser-600.

In terms of processing, sumoylated. Desumoylation by DESI1 reverses transcriptional repression activity.

The protein resides in the nucleus. Functions as a transcriptional repressor for PRDM1. This is Zinc finger and BTB domain-containing protein 46 (Zbtb46) from Mus musculus (Mouse).